The chain runs to 98 residues: MDIERGIRVAVDTGKVILGSNKAIQAIKLGNGELAIMAENTPKNVKADIEAYSKLSEMPVYTFEGSSVELGSICGKPFTVSVLIIQEPGDSNILEIKE.

Belongs to the eukaryotic ribosomal protein eL30 family.

This chain is Large ribosomal subunit protein eL30, found in Methanosphaera stadtmanae (strain ATCC 43021 / DSM 3091 / JCM 11832 / MCB-3).